Reading from the N-terminus, the 553-residue chain is Copine-9 (553 aa).

C2 domains follow at residues 1 to 125 (MSLG…ERTL) and 132 to 255 (KCGT…FTVY). Asparagine 95 is a glycosylation site (N-linked (GlcNAc...) asparagine). Ca(2+)-binding residues include aspartate 163, aspartate 169, aspartate 225, aspartate 227, and aspartate 233. Residues 299–500 (NFTVAIDFTA…VQFVPFRDYV (202 aa)) form the VWFA domain. A disordered region spans residues 531-553 (TRDIQPRPPPPANPSPIPAPEQP). The span at 536-553 (PRPPPPANPSPIPAPEQP) shows a compositional bias: pro residues.

Belongs to the copine family. Ca(2+) is required as a cofactor. Expressed in melanocytes.

Probable calcium-dependent phospholipid-binding protein that may play a role in calcium-mediated intracellular processes. Plays a role in dendrite formation by melanocytes. The chain is Copine-9 from Homo sapiens (Human).